Reading from the N-terminus, the 347-residue chain is MQKTIGDIMNNRIERFLKYMESEGIKKAVILKKENINYFLGKYFMSFSVLVFEEQPYLYVGKLDKDYAEEHFNFLEIREFKSWEEIFKGCDGVEKELSIGYLKYIDKEYKIISDKIKEMRMIKDKEEIKLIKKAAEISDKAINWVLNNLDEVKNLTEYELVAEIEYIMKKHGSIKPAFDSIVVSGKKTSFPHALPTKDKIADILLVDIGAVYEGYCSDITRTFLLKDDEEMKKIYNLVYEAKKVAEEHLKEGISAKQIDNIVREFFNDYKELFIHSLGHGVGLEVHEEPRLSNKLKDDEDIILKEGMVVTIEPGLYLKDKFGVRIEDLYLVKKNGFEKLSKAEISEY.

Aspartate 207, aspartate 218, histidine 279, glutamate 312, and glutamate 326 together coordinate Mn(2+).

This sequence belongs to the peptidase M24B family. It depends on Mn(2+) as a cofactor.

This is an uncharacterized protein from Methanocaldococcus jannaschii (strain ATCC 43067 / DSM 2661 / JAL-1 / JCM 10045 / NBRC 100440) (Methanococcus jannaschii).